The following is a 190-amino-acid chain: Potassium-transporting ATPase KdpC subunit (190 aa).

Residues 10–30 (TFLFLLLITGGVYPLLTTALG) traverse the membrane as a helical segment.

It belongs to the KdpC family. The system is composed of three essential subunits: KdpA, KdpB and KdpC.

Its subcellular location is the cell inner membrane. In terms of biological role, part of the high-affinity ATP-driven potassium transport (or Kdp) system, which catalyzes the hydrolysis of ATP coupled with the electrogenic transport of potassium into the cytoplasm. This subunit acts as a catalytic chaperone that increases the ATP-binding affinity of the ATP-hydrolyzing subunit KdpB by the formation of a transient KdpB/KdpC/ATP ternary complex. This Escherichia fergusonii (strain ATCC 35469 / DSM 13698 / CCUG 18766 / IAM 14443 / JCM 21226 / LMG 7866 / NBRC 102419 / NCTC 12128 / CDC 0568-73) protein is Potassium-transporting ATPase KdpC subunit.